Reading from the N-terminus, the 269-residue chain is Hydroxyethylthiazole kinase (269 aa).

Methionine 42 provides a ligand contact to substrate. Positions 118 and 164 each coordinate ATP. Glycine 191 provides a ligand contact to substrate.

It belongs to the Thz kinase family. Mg(2+) is required as a cofactor.

It catalyses the reaction 5-(2-hydroxyethyl)-4-methylthiazole + ATP = 4-methyl-5-(2-phosphooxyethyl)-thiazole + ADP + H(+). Its pathway is cofactor biosynthesis; thiamine diphosphate biosynthesis; 4-methyl-5-(2-phosphoethyl)-thiazole from 5-(2-hydroxyethyl)-4-methylthiazole: step 1/1. Functionally, catalyzes the phosphorylation of the hydroxyl group of 4-methyl-5-beta-hydroxyethylthiazole (THZ). The polypeptide is Hydroxyethylthiazole kinase (Listeria welshimeri serovar 6b (strain ATCC 35897 / DSM 20650 / CCUG 15529 / CIP 8149 / NCTC 11857 / SLCC 5334 / V8)).